Here is a 599-residue protein sequence, read N- to C-terminus: Serine/threonine-protein kinase haspin homolog (599 aa).

One can recognise a Protein kinase domain in the interval 287-599 (PESIVKIGEG…FSDMLMDQIS (313 aa)). ATP is bound by residues 293–301 (IGEGTYGEA), K310, 407–412 (EHGGKD), 448–453 (DLHWGN), and 486–488 (DFT). The active-site Proton acceptor is the D448.

Belongs to the protein kinase superfamily. Ser/Thr protein kinase family. Haspin subfamily. In terms of tissue distribution, expressed in meristems and primordia of root tips, lateral roots, shoot apex, leaves and flowers.

Its subcellular location is the cytoplasm. It is found in the perinuclear region. It localises to the nucleus. The protein resides in the chromosome. The protein localises to the cytoskeleton. Its subcellular location is the phragmoplast. The catalysed reaction is L-seryl-[protein] + ATP = O-phospho-L-seryl-[protein] + ADP + H(+). The enzyme catalyses L-threonyl-[protein] + ATP = O-phospho-L-threonyl-[protein] + ADP + H(+). Threonine-protein kinase that phosphorylates histone H3 in vitro at 'Thr-3' (H3T3ph) and 'Thr-11' (H3T11ph), but not at 'Ser-10' (H3S10ph) or 'Ser-28' (H3S28ph). Plays a role in mitotic cell division during plant growth. Threonine-protein kinase that phosphorylates histone H3 in vitro at 'Thr-3' (H3T3ph), but not at 'Thr-11' (H3T11ph), 'Ser-10' (H3S10ph) or 'Ser-28' (H3S28ph). Involved in histone H3 phosphorylation in mitotic cells. Contributes to organ and plant development, as well as embryonic patterning. The sequence is that of Serine/threonine-protein kinase haspin homolog from Arabidopsis thaliana (Mouse-ear cress).